Reading from the N-terminus, the 93-residue chain is Large ribosomal subunit protein eL31 (93 aa).

The protein belongs to the eukaryotic ribosomal protein eL31 family.

This is Large ribosomal subunit protein eL31 from Methanosarcina mazei (strain ATCC BAA-159 / DSM 3647 / Goe1 / Go1 / JCM 11833 / OCM 88) (Methanosarcina frisia).